The following is a 457-amino-acid chain: Protein unc-93 homolog A (457 aa).

5 helical membrane passes run 8-28 (VLVVSFGFLLLFTAYGGLQSL), 42-62 (ALSTLYGGMLLSSMFLPPLLI), 65-85 (LGCKGTIILSMCGYVAFSVGN), 86-106 (FFASWYTLIPTSILLGLGAAP), and 140-160 (IFFLIFQSSGVWGNLISSLVF). Asparagine 190 carries N-linked (GlcNAc...) asparagine glycosylation. The next 6 helical transmembrane spans lie at 202-222 (TLLGIYTGSGVLAVLMIAAFL), 257-277 (LCLLILLPLYSGLQQGFLSSE), 291-311 (FVGYVMICFSATDALCSVLYG), 320-340 (AVLYVLGAVTHVSCMIALLLW), 344-364 (ADHLAVFFVFSGLWGVADAVW), and 395-415 (FVIAFGYSMFLCVHVKLYILL).

It belongs to the unc-93 family. Expressed in testis, small intestine, spleen, prostate and ovary.

Its subcellular location is the cell membrane. The protein is Protein unc-93 homolog A (UNC93A) of Homo sapiens (Human).